A 211-amino-acid chain; its full sequence is Recombination protein RecR (211 aa).

The segment at 70 to 85 (CRECFLITDREVCPIC) adopts a C4-type zinc-finger fold. One can recognise a Toprim domain in the interval 93–190 (KFICVVEESQ…KITRTAYGFQ (98 aa)).

Belongs to the RecR family.

May play a role in DNA repair. It seems to be involved in an RecBC-independent recombinational process of DNA repair. It may act with RecF and RecO. The polypeptide is Recombination protein RecR (Aquifex aeolicus (strain VF5)).